The chain runs to 961 residues: Mitogen-activated protein kinase kinase kinase 13-B (961 aa).

The segment at 89–115 is disordered; the sequence is RDQDEPENTAPQGSSHSGDGGNNSANE. Residues 101–114 show a composition bias toward low complexity; it reads GSSHSGDGGNNSAN. The region spanning 171 to 412 is the Protein kinase domain; it reads ISELQWLGSG…FRQILMHLDI (242 aa). ATP-binding positions include 177-185 and Lys198; that span reads LGSGAQGAV. The active-site Proton acceptor is the Asp282. 2 leucine-zipper regions span residues 436–457 and 489–510; these read VKKH…DEEL and LSSI…EQTV. Residues 460-497 adopt a coiled-coil conformation; it reads RRREELRHALDIREHYERKLERANNLYMELSSIMLQLE. Disordered regions lie at residues 507-644, 796-874, and 933-961; these read EQTV…ETSQ, TPPA…DVAC, and NAES…SSTW. The segment covering 563-580 has biased composition (low complexity); it reads AEGSAASASPISGSPKTS. Basic residues predominate over residues 586–598; that stretch reads GRYRSKPRHRRGN. Over residues 613–628 the composition is skewed to low complexity; sequence QESPAPSQQSSQHQTP. A compositionally biased stretch (acidic residues) spans 813–826; the sequence is DSSEGEEGEVDSEV. The acidic stretch occupies residues 814–827; sequence SSEGEEGEVDSEVE. A compositionally biased stretch (polar residues) spans 839 to 854; it reads STCQSYSTFSSENFSV. The segment covering 934–945 has biased composition (acidic residues); the sequence is AESDCDSSEGEC. A compositionally biased stretch (polar residues) spans 949–961; that stretch reads TVRTNNPVNSSTW.

The protein belongs to the protein kinase superfamily. Ser/Thr protein kinase family.

It is found in the cytoplasm. It localises to the membrane. The catalysed reaction is L-seryl-[protein] + ATP = O-phospho-L-seryl-[protein] + ADP + H(+). It catalyses the reaction L-threonyl-[protein] + ATP = O-phospho-L-threonyl-[protein] + ADP + H(+). May have a role in the JNK signaling pathway. This chain is Mitogen-activated protein kinase kinase kinase 13-B (map3k13-b), found in Xenopus laevis (African clawed frog).